The sequence spans 121 residues: Neuromedin-B (121 aa).

The first 24 residues, 1-24, serve as a signal peptide directing secretion; that stretch reads MTLRARGARLLGGLLFFTLLAAGA. Met-56 is subject to Methionine amide. Positions 60-121 are excised as a propeptide; it reads SLEPPNPSLL…RRLLVQTLEK (62 aa).

The protein belongs to the bombesin/neuromedin-B/ranatensin family. As to expression, higher expression in the central nervous system (CNS) than in peripheral tissues. Highest levels are found in the olfactory bulb. Relatively high levels in the CNS (including the cerebral cortex, cerebellum, spinal cord, medulla oblongata, midbrain, hypothalamus, hippocampus, and hypophysis) and in peripheral tissues such as the pancreas, adrenal gland, testis, ovary and cecum. Moderate levels are found in the rectum, heart and pons with low expression levels detected in the bone marrow and duodenum. Other tissues show no or low levels of expression.

It is found in the secreted. Its subcellular location is the cell projection. It localises to the neuron projection. In terms of biological role, stimulates smooth muscle contraction. Induces sighing by acting directly on the pre-Botzinger complex, a cluster of several thousand neurons in the ventrolateral medulla responsible for inspiration during respiratory activity. Contributes to the induction of sneezing following exposure to chemical irritants or allergens which causes release of NMB by nasal sensory neurons and activation of NMBR-expressing neurons in the sneeze-evoking region of the brainstem. These in turn activate neurons of the caudal ventral respiratory group, giving rise to the sneezing response. Contributes to induction of acute itch, possibly through activation of the NMBR receptor on dorsal root ganglion neurons. Increases expression of NMBR and steroidogenic mediators STAR, CYP11A1 and HSD3B1 in Leydig cells, induces secretion of testosterone by Leydig cells and also promotes Leydig cell proliferation. Plays a role in the innate immune response to influenza A virus infection by enhancing interferon alpha expression and reducing expression of IL6. Plays a role in CSF1-induced proliferation of osteoclast precursors by contributing to positive regulation of the expression of the CSF1 receptor CSF1R. This Sus scrofa (Pig) protein is Neuromedin-B (NMB).